Consider the following 328-residue polypeptide: DNA-directed RNA polymerase subunit alpha (328 aa).

The interval 1–231 is alpha N-terminal domain (alpha-NTD); it reads MQTNLLKPKA…EQLAVFAQLE (231 aa). The alpha C-terminal domain (alpha-CTD) stretch occupies residues 248–328; the sequence is FDPILLRPVD…NWPPQGLDKR (81 aa).

The protein belongs to the RNA polymerase alpha chain family. In terms of assembly, homodimer. The RNAP catalytic core consists of 2 alpha, 1 beta, 1 beta' and 1 omega subunit. When a sigma factor is associated with the core the holoenzyme is formed, which can initiate transcription.

The catalysed reaction is RNA(n) + a ribonucleoside 5'-triphosphate = RNA(n+1) + diphosphate. In terms of biological role, DNA-dependent RNA polymerase catalyzes the transcription of DNA into RNA using the four ribonucleoside triphosphates as substrates. In Leptothrix cholodnii (strain ATCC 51168 / LMG 8142 / SP-6) (Leptothrix discophora (strain SP-6)), this protein is DNA-directed RNA polymerase subunit alpha.